A 252-amino-acid polypeptide reads, in one-letter code: Sensory transduction protein LytR (252 aa).

Residues K2–D116 form the Response regulatory domain. A 4-aspartylphosphate modification is found at D53. In terms of domain architecture, HTH LytTR-type spans L147–L251.

Post-translationally, phosphorylated by LytS.

Its subcellular location is the cytoplasm. Its function is as follows. Member of the two-component regulatory system LytR/LytS that probably regulates genes involved in cell wall metabolism. The chain is Sensory transduction protein LytR (lytR) from Staphylococcus epidermidis (strain ATCC 12228 / FDA PCI 1200).